A 129-amino-acid chain; its full sequence is NADH-quinone oxidoreductase subunit K 2 (129 aa).

A run of 3 helical transmembrane segments spans residues L3–A23, I28–F48, and L68–V88. The disordered stretch occupies residues D98 to A129. A compositionally biased stretch (low complexity) spans G111–A122.

The protein belongs to the complex I subunit 4L family. In terms of assembly, NDH-1 is composed of 14 different subunits. Subunits NuoA, H, J, K, L, M, N constitute the membrane sector of the complex.

Its subcellular location is the cell membrane. It catalyses the reaction a quinone + NADH + 5 H(+)(in) = a quinol + NAD(+) + 4 H(+)(out). In terms of biological role, NDH-1 shuttles electrons from NADH, via FMN and iron-sulfur (Fe-S) centers, to quinones in the respiratory chain. The immediate electron acceptor for the enzyme in this species is believed to be a menaquinone. Couples the redox reaction to proton translocation (for every two electrons transferred, four hydrogen ions are translocated across the cytoplasmic membrane), and thus conserves the redox energy in a proton gradient. The sequence is that of NADH-quinone oxidoreductase subunit K 2 from Streptomyces avermitilis (strain ATCC 31267 / DSM 46492 / JCM 5070 / NBRC 14893 / NCIMB 12804 / NRRL 8165 / MA-4680).